We begin with the raw amino-acid sequence, 271 residues long: Probable ribosome biogenesis GTPase A (271 aa).

In terms of domain architecture, CP-type G spans 21–175; sequence HDQLKKLASS…LSDTPGVFFK (155 aa). GTP is bound by residues 127–132 and Gly171; that span reads NVGKSS.

Belongs to the TRAFAC class YlqF/YawG GTPase family. MTG1 subfamily.

The protein localises to the cytoplasm. Functionally, required for a late step of 50S ribosomal subunit assembly. Has GTPase activity. Binds to the 23S rRNA. The sequence is that of Probable ribosome biogenesis GTPase A (rbgA) from Mycoplasma pneumoniae (strain ATCC 29342 / M129 / Subtype 1) (Mycoplasmoides pneumoniae).